The sequence spans 73 residues: Cytochrome b559 subunit alpha (73 aa).

Residues 21–35 traverse the membrane as a helical segment; sequence IIHSITVPSLFIAGW. Heme is bound at residue His-23.

It belongs to the PsbE/PsbF family. As to quaternary structure, heterodimer of an alpha subunit and a beta subunit. PSII is composed of 1 copy each of membrane proteins PsbA, PsbB, PsbC, PsbD, PsbE, PsbF, PsbH, PsbI, PsbJ, PsbK, PsbL, PsbM, PsbT, PsbY, PsbZ, Psb30/Ycf12, at least 3 peripheral proteins of the oxygen-evolving complex and a large number of cofactors. It forms dimeric complexes. It depends on heme b as a cofactor.

It localises to the plastid. Its subcellular location is the chloroplast thylakoid membrane. In terms of biological role, this b-type cytochrome is tightly associated with the reaction center of photosystem II (PSII). PSII is a light-driven water:plastoquinone oxidoreductase that uses light energy to abstract electrons from H(2)O, generating O(2) and a proton gradient subsequently used for ATP formation. It consists of a core antenna complex that captures photons, and an electron transfer chain that converts photonic excitation into a charge separation. The protein is Cytochrome b559 subunit alpha of Bigelowiella natans (Pedinomonas minutissima).